A 156-amino-acid polypeptide reads, in one-letter code: Small ribosomal subunit protein uS7 (156 aa).

The protein belongs to the universal ribosomal protein uS7 family. In terms of assembly, part of the 30S ribosomal subunit. Contacts proteins S9 and S11.

In terms of biological role, one of the primary rRNA binding proteins, it binds directly to 16S rRNA where it nucleates assembly of the head domain of the 30S subunit. Is located at the subunit interface close to the decoding center, probably blocks exit of the E-site tRNA. This chain is Small ribosomal subunit protein uS7, found in Jannaschia sp. (strain CCS1).